The chain runs to 751 residues: Catalase-peroxidase 1 (751 aa).

Basic and acidic residues predominate over residues 1 to 11; sequence MTDKQHTRSVS. Residues 1–31 form a disordered region; sequence MTDKQHTRSVSESENPAIPSPTPKVSRPRRN. Positions 103–225 form a cross-link, tryptophyl-tyrosyl-methioninium (Trp-Tyr) (with M-251); sequence WHAAGTYRIA…LANVQMGLIY (123 aa). His-104 acts as the Proton acceptor in catalysis. Positions 225–251 form a cross-link, tryptophyl-tyrosyl-methioninium (Tyr-Met) (with W-103); that stretch reads YVNPEGPGGNPDPLAAARDIRETFARM. His-266 is a binding site for heme b. The interval 345–375 is disordered; it reads AGAKQWKPKNPEANDTVPDAHGASRRHSPTM.

This sequence belongs to the peroxidase family. Peroxidase/catalase subfamily. Homodimer or homotetramer. The cofactor is heme b. Formation of the three residue Trp-Tyr-Met cross-link is important for the catalase, but not the peroxidase activity of the enzyme.

The catalysed reaction is H2O2 + AH2 = A + 2 H2O. It catalyses the reaction 2 H2O2 = O2 + 2 H2O. Functionally, bifunctional enzyme with both catalase and broad-spectrum peroxidase activity. The chain is Catalase-peroxidase 1 from Cupriavidus pinatubonensis (strain JMP 134 / LMG 1197) (Cupriavidus necator (strain JMP 134)).